Reading from the N-terminus, the 692-residue chain is Protein artemis (692 aa).

At Thr-380 the chain carries Phosphothreonine. Ser-385 bears the Phosphoserine mark. Disordered stretches follow at residues 503–555 (RLEN…DSQS) and 640–660 (STNADSQSSSDFEVPSTPEAE). Polar residues predominate over residues 507 to 520 (FPSSTEAGGSQSPK). The span at 530–543 (THISSQNSSQSTHI) shows a compositional bias: low complexity. Polar residues-rich tracts occupy residues 544-555 (TEQGSQGWDSQS) and 640-650 (STNADSQSSSD). The residue at position 645 (Ser-645) is a Phosphoserine; by ATM.

This sequence belongs to the DNA repair metallo-beta-lactamase (DRMBL) family. In terms of assembly, interacts with LIG4; the interaction is direct. Interacts with ATM. Interacts with BRCA1. Interacts with PRKDC. Interacts with TP53BP1. Also exhibits ATM- and phosphorylation-dependent interaction with the MRN complex, composed of MRE11, RAD50, and NBN. Post-translationally, phosphorylation on undefined residues by PRKDC may stimulate endonucleolytic activity on 5' and 3' hairpins and overhangs. PRKDC must remain present, even after phosphorylation, for efficient hairpin opening. Also phosphorylated by ATM in response to ionizing radiation (IR) and by ATR in response to ultraviolet (UV) radiation.

It localises to the nucleus. Required for V(D)J recombination, the process by which exons encoding the antigen-binding domains of immunoglobulins and T-cell receptor proteins are assembled from individual V, (D), and J gene segments. V(D)J recombination is initiated by the lymphoid specific RAG endonuclease complex, which generates site specific DNA double strand breaks (DSBs). These DSBs present two types of DNA end structures: hairpin sealed coding ends and phosphorylated blunt signal ends. These ends are independently repaired by the non homologous end joining (NHEJ) pathway to form coding and signal joints respectively. This protein exhibits single-strand specific 5'-3' exonuclease activity in isolation, and acquires endonucleolytic activity on 5' and 3' hairpins and overhangs when in a complex with PRKDC. The latter activity is required specifically for the resolution of closed hairpins prior to the formation of the coding joint. May also be required for the repair of complex DSBs induced by ionizing radiation, which require substantial end-processing prior to religation by NHEJ. The polypeptide is Protein artemis (DCLRE1C) (Pongo abelii (Sumatran orangutan)).